The sequence spans 211 residues: Large ribosomal subunit protein uL3 (211 aa).

Position 150 is an N5-methylglutamine (Q150).

Belongs to the universal ribosomal protein uL3 family. As to quaternary structure, part of the 50S ribosomal subunit. Forms a cluster with proteins L14 and L19. Post-translationally, methylated by PrmB.

One of the primary rRNA binding proteins, it binds directly near the 3'-end of the 23S rRNA, where it nucleates assembly of the 50S subunit. The polypeptide is Large ribosomal subunit protein uL3 (Pseudomonas putida (strain GB-1)).